A 141-amino-acid polypeptide reads, in one-letter code: Cytochrome c-type biogenesis protein CcmE (141 aa).

Over 1–7 the chain is Cytoplasmic; sequence MQRKHKR. Residues 8 to 28 form a helical; Signal-anchor for type II membrane protein membrane-spanning segment; it reads ILFVAVSFIALGCVSAFVLFE. Topologically, residues 29–141 are periplasmic; sequence LSKSISFFCT…SSDAAVIGSS (113 aa). Heme contacts are provided by H121 and Y125.

The protein belongs to the CcmE/CycJ family.

It localises to the cell inner membrane. Heme chaperone required for the biogenesis of c-type cytochromes. Transiently binds heme delivered by CcmC and transfers the heme to apo-cytochromes in a process facilitated by CcmF and CcmH. The protein is Cytochrome c-type biogenesis protein CcmE of Anaplasma phagocytophilum (strain HZ).